A 365-amino-acid polypeptide reads, in one-letter code: Peptide chain release factor 2 (365 aa).

Gln-252 is modified (N5-methylglutamine).

The protein belongs to the prokaryotic/mitochondrial release factor family. Methylated by PrmC. Methylation increases the termination efficiency of RF2.

Its subcellular location is the cytoplasm. Peptide chain release factor 2 directs the termination of translation in response to the peptide chain termination codons UGA and UAA. The chain is Peptide chain release factor 2 (prfB) from Salmonella typhimurium (strain LT2 / SGSC1412 / ATCC 700720).